A 352-amino-acid chain; its full sequence is Selenide, water dikinase (352 aa).

Residue Cys-23 is part of the active site. Residues Lys-26 and 54 to 56 each bind ATP; that span reads SRD. Asp-57 lines the Mg(2+) pocket. Residues Asp-74, Asp-97, and 145–147 contribute to the ATP site; that span reads GHS. Asp-97 serves as a coordination point for Mg(2+). Residue Asp-233 coordinates Mg(2+).

It belongs to the selenophosphate synthase 1 family. Class I subfamily. As to quaternary structure, homodimer. Mg(2+) serves as cofactor.

It carries out the reaction hydrogenselenide + ATP + H2O = selenophosphate + AMP + phosphate + 2 H(+). In terms of biological role, synthesizes selenophosphate from selenide and ATP. This Shewanella sp. (strain MR-7) protein is Selenide, water dikinase.